The chain runs to 379 residues: 4-hydroxy-3-methylbut-2-enyl diphosphate reductase (379 aa).

Position 39 (cysteine 39) interacts with [4Fe-4S] cluster. Histidine 69 contributes to the (2E)-4-hydroxy-3-methylbut-2-enyl diphosphate binding site. Residue histidine 69 participates in dimethylallyl diphosphate binding. Histidine 69 is an isopentenyl diphosphate binding site. Cysteine 130 is a [4Fe-4S] cluster binding site. Histidine 158 is a (2E)-4-hydroxy-3-methylbut-2-enyl diphosphate binding site. Residue histidine 158 coordinates dimethylallyl diphosphate. Histidine 158 contributes to the isopentenyl diphosphate binding site. Glutamate 160 serves as the catalytic Proton donor. Residue threonine 223 coordinates (2E)-4-hydroxy-3-methylbut-2-enyl diphosphate. Residue cysteine 261 coordinates [4Fe-4S] cluster. Residues serine 290, serine 291, asparagine 292, and serine 352 each contribute to the (2E)-4-hydroxy-3-methylbut-2-enyl diphosphate site. Residues serine 290, serine 291, asparagine 292, and serine 352 each contribute to the dimethylallyl diphosphate site. Serine 290, serine 291, asparagine 292, and serine 352 together coordinate isopentenyl diphosphate.

It belongs to the IspH family. [4Fe-4S] cluster is required as a cofactor.

The enzyme catalyses isopentenyl diphosphate + 2 oxidized [2Fe-2S]-[ferredoxin] + H2O = (2E)-4-hydroxy-3-methylbut-2-enyl diphosphate + 2 reduced [2Fe-2S]-[ferredoxin] + 2 H(+). It catalyses the reaction dimethylallyl diphosphate + 2 oxidized [2Fe-2S]-[ferredoxin] + H2O = (2E)-4-hydroxy-3-methylbut-2-enyl diphosphate + 2 reduced [2Fe-2S]-[ferredoxin] + 2 H(+). It functions in the pathway isoprenoid biosynthesis; dimethylallyl diphosphate biosynthesis; dimethylallyl diphosphate from (2E)-4-hydroxy-3-methylbutenyl diphosphate: step 1/1. The protein operates within isoprenoid biosynthesis; isopentenyl diphosphate biosynthesis via DXP pathway; isopentenyl diphosphate from 1-deoxy-D-xylulose 5-phosphate: step 6/6. Catalyzes the conversion of 1-hydroxy-2-methyl-2-(E)-butenyl 4-diphosphate (HMBPP) into a mixture of isopentenyl diphosphate (IPP) and dimethylallyl diphosphate (DMAPP). Acts in the terminal step of the DOXP/MEP pathway for isoprenoid precursor biosynthesis. This chain is 4-hydroxy-3-methylbut-2-enyl diphosphate reductase, found in Synechocystis sp. (strain ATCC 27184 / PCC 6803 / Kazusa).